Reading from the N-terminus, the 313-residue chain is Ribosomal RNA small subunit methyltransferase H (313 aa).

S-adenosyl-L-methionine-binding positions include 35–37, Asp55, Phe79, Asp100, and Gln107; that span reads GGH.

The protein belongs to the methyltransferase superfamily. RsmH family.

The protein localises to the cytoplasm. The enzyme catalyses cytidine(1402) in 16S rRNA + S-adenosyl-L-methionine = N(4)-methylcytidine(1402) in 16S rRNA + S-adenosyl-L-homocysteine + H(+). Specifically methylates the N4 position of cytidine in position 1402 (C1402) of 16S rRNA. The chain is Ribosomal RNA small subunit methyltransferase H from Burkholderia orbicola (strain MC0-3).